Reading from the N-terminus, the 61-residue chain is Sperm protamine P1 (61 aa).

Positions Met1–Tyr61 are disordered.

It belongs to the protamine P1 family. As to expression, testis.

Its subcellular location is the nucleus. It is found in the chromosome. Its function is as follows. Protamines substitute for histones in the chromatin of sperm during the haploid phase of spermatogenesis. They compact sperm DNA into a highly condensed, stable and inactive complex. This Setonix brachyurus (Quokka) protein is Sperm protamine P1 (PRM1).